The chain runs to 534 residues: Cytochrome P450 714B1 (534 aa).

A topological domain (lumenal) is located at residue Met-1. Residues 2-22 (VVVVAAAMAAASLCCGVAAYL) traverse the membrane as a helical; Signal-anchor for type III membrane protein segment. The Cytoplasmic portion of the chain corresponds to 23–534 (YYVLWLAPER…RSKCDWAGFD (512 aa)). Cys-472 contributes to the heme binding site.

It belongs to the cytochrome P450 family. It depends on heme as a cofactor. In terms of tissue distribution, highly expressed in spikelet and uppermost internode. Detected in shoots, roots, leaves and anthers.

The protein resides in the membrane. Functionally, catalyzes the 13-hydroxylation of gibberellins (GAs). Determines the ratio of GA4 and GA1. Converts GA12 into GA53. This is Cytochrome P450 714B1 (CYP714B1) from Oryza sativa subsp. japonica (Rice).